We begin with the raw amino-acid sequence, 462 residues long: Putative ABC transporter A445L (462 aa).

It belongs to the protein kinase superfamily. ADCK protein kinase family.

This is Putative ABC transporter A445L from Chlorella (PBCV-1).